We begin with the raw amino-acid sequence, 91 residues long: Protein SPATA45 homolog (91 aa).

A disordered region spans residues 42-91 (RADRKHDPNGFNSSVFKGASNQHQESSLDFATAEPEFHRERRHFPEKSEY). The segment covering 51-70 (GFNSSVFKGASNQHQESSLD) has biased composition (polar residues). Residues 76–91 (PEFHRERRHFPEKSEY) are compositionally biased toward basic and acidic residues.

This sequence belongs to the SPATA45 family.

This Nematostella vectensis (Starlet sea anemone) protein is Protein SPATA45 homolog.